The sequence spans 121 residues: Probable intron-encoded DNA endonuclease aI1 (121 aa).

Belongs to the LAGLIDADG endonuclease family.

The protein resides in the mitochondrion. In terms of biological role, mitochondrial DNA endonuclease involved in intron homing. This is Probable intron-encoded DNA endonuclease aI1 (aI1) from Mycosarcoma maydis (Corn smut fungus).